The sequence spans 1551 residues: Pentafunctional AROM polypeptide (1551 aa).

Residues 1–379 are 3-dehydroquinate synthase; it reads MSIEKVPILG…YQLKAHQVSK (379 aa). Residues 42–44, 80–83, 111–113, and Asp116 contribute to the NAD(+) site; these read DTN, ENNK, and GGV. Arg127 contacts 7-phospho-2-dehydro-3-deoxy-D-arabino-heptonate. Residue 136-137 participates in NAD(+) binding; it reads TT. Residues Asp143 and Lys149 each coordinate 7-phospho-2-dehydro-3-deoxy-D-arabino-heptonate. Lys158 contributes to the NAD(+) binding site. 7-phospho-2-dehydro-3-deoxy-D-arabino-heptonate is bound at residue Asn159. Residues 176–179 and Asn187 contribute to the NAD(+) site; that span reads FLET. Glu191 contacts Zn(2+). 7-phospho-2-dehydro-3-deoxy-D-arabino-heptonate-binding positions include 191-194 and Lys243; that span reads EVVK. The active-site Proton acceptor; for 3-dehydroquinate synthase activity is Glu253. Residues 257-261 and His264 each bind 7-phospho-2-dehydro-3-deoxy-D-arabino-heptonate; that span reads RNLLN. His264 lines the Zn(2+) pocket. The Proton acceptor; for 3-dehydroquinate synthase activity role is filled by His268. Residues His280 and Lys351 each coordinate 7-phospho-2-dehydro-3-deoxy-D-arabino-heptonate. Position 280 (His280) interacts with Zn(2+). An EPSP synthase region spans residues 392–838; it reads VHPFTNPPKE…WDILHSKFKI (447 aa). Residues 858–1048 are shikimate kinase; the sequence is DKSIIVIGMR…VPAGRSAAVV (191 aa). 865-872 lines the ATP pocket; the sequence is GMRGTGKS. Positions 1049-1258 are 3-dehydroquinase; that stretch reads LTSPDLNEVV…NDEEFLTIGE (210 aa). Arg1194 serves as the catalytic Schiff-base intermediate with substrate; for 3-dehydroquinate dehydratase activity. Positions 1271 to 1551 are shikimate dehydrogenase; sequence AKKFWVIGSP…EIIHRAVVEE (281 aa).

This sequence in the N-terminal section; belongs to the sugar phosphate cyclases superfamily. Dehydroquinate synthase family. The protein in the 2nd section; belongs to the EPSP synthase family. It in the 3rd section; belongs to the shikimate kinase family. In the 4th section; belongs to the type-I 3-dehydroquinase family. This sequence in the C-terminal section; belongs to the shikimate dehydrogenase family. Homodimer. The cofactor is Zn(2+).

It is found in the cytoplasm. The enzyme catalyses 7-phospho-2-dehydro-3-deoxy-D-arabino-heptonate = 3-dehydroquinate + phosphate. The catalysed reaction is 3-dehydroquinate = 3-dehydroshikimate + H2O. It carries out the reaction shikimate + NADP(+) = 3-dehydroshikimate + NADPH + H(+). It catalyses the reaction shikimate + ATP = 3-phosphoshikimate + ADP + H(+). The enzyme catalyses 3-phosphoshikimate + phosphoenolpyruvate = 5-O-(1-carboxyvinyl)-3-phosphoshikimate + phosphate. It functions in the pathway metabolic intermediate biosynthesis; chorismate biosynthesis; chorismate from D-erythrose 4-phosphate and phosphoenolpyruvate: step 2/7. The protein operates within metabolic intermediate biosynthesis; chorismate biosynthesis; chorismate from D-erythrose 4-phosphate and phosphoenolpyruvate: step 3/7. Its pathway is metabolic intermediate biosynthesis; chorismate biosynthesis; chorismate from D-erythrose 4-phosphate and phosphoenolpyruvate: step 4/7. It participates in metabolic intermediate biosynthesis; chorismate biosynthesis; chorismate from D-erythrose 4-phosphate and phosphoenolpyruvate: step 5/7. It functions in the pathway metabolic intermediate biosynthesis; chorismate biosynthesis; chorismate from D-erythrose 4-phosphate and phosphoenolpyruvate: step 6/7. The AROM polypeptide catalyzes 5 consecutive enzymatic reactions in prechorismate polyaromatic amino acid biosynthesis. This chain is Pentafunctional AROM polypeptide, found in Candida albicans (strain SC5314 / ATCC MYA-2876) (Yeast).